The sequence spans 681 residues: MSNNTTSLPAENSSHPRKGTPIRKKQREEAQQFINTLQGVTFPNSQRIYLQGSRPDIQVPMREIQLSPTQIGGSKNEPRYEDNEAIPVYDTSGPYGDPQAKLDVHNGLPKLRAAWVADRQDTEALASVSSGFTQQRLADEGLDHLRFEHLPRPRKAATGQCVTQLHYARQGKITPEMEFIALRENMGRERIRGEVLLQQHPGQAFGAHLPENITAEFVRQEVAAGRAIIPANINHPESEPMIIGRNFLVKVNANIGNSAVTSSIEEEVEKLVWSTRWGADTVMDLSTGRYIHETREWILRNSPVPIGTVPIYQALEKVNGVAENLTWEMFRDTLLEQAEQGVDYFTLHAGVLLRYVPMTAKRLTGIVSRGGSIMAKWCLSHHQENFLYQHFREICQICAAYDVSLSLGDGLRPGSIQDANDEAQFAELHTLGELTKIAWEYDVQVMIEGPGHVPMQMIRRNMTEELEHCHEAPFYTLGPLTTDIAPGYDHFTSGIGAAMIGWFGCAMLCYVTPKEHLGLPNKEDVKQGLITYKIAAHAADLAKGHPGAQIRDNAMSKARFEFRWEDQFNLALDPATARAYHDETLPQESGKVAHFCSMCGPKFCSMKISQEVRDYAAAQEQAAAQAQAATPTTAAQPIDITQPINMLQSGMEKMSAEFRSRGSELYHRPANLSAEANNEPT.

A compositionally biased stretch (polar residues) spans 1-13 (MSNNTTSLPAENS). The interval 1-29 (MSNNTTSLPAENSSHPRKGTPIRKKQREE) is disordered. Residues 15–25 (HPRKGTPIRKK) are compositionally biased toward basic residues. Substrate contacts are provided by residues Asn254, Met283, Tyr312, His348, 368 to 370 (SRG), 409 to 412 (DGLR), and Glu448. A Zn(2+)-binding site is contributed by His452. Residue Tyr475 participates in substrate binding. His516 contributes to the Zn(2+) binding site. [4Fe-4S] cluster-binding residues include Cys596, Cys599, and Cys604. The span at 658–667 (FRSRGSELYH) shows a compositional bias: basic and acidic residues. Positions 658–681 (FRSRGSELYHRPANLSAEANNEPT) are disordered.

Belongs to the ThiC family. In terms of assembly, homodimer. The cofactor is [4Fe-4S] cluster.

It catalyses the reaction 5-amino-1-(5-phospho-beta-D-ribosyl)imidazole + S-adenosyl-L-methionine = 4-amino-2-methyl-5-(phosphooxymethyl)pyrimidine + CO + 5'-deoxyadenosine + formate + L-methionine + 3 H(+). It functions in the pathway cofactor biosynthesis; thiamine diphosphate biosynthesis. Functionally, catalyzes the synthesis of the hydroxymethylpyrimidine phosphate (HMP-P) moiety of thiamine from aminoimidazole ribotide (AIR) in a radical S-adenosyl-L-methionine (SAM)-dependent reaction. The protein is Phosphomethylpyrimidine synthase of Yersinia pseudotuberculosis serotype I (strain IP32953).